Reading from the N-terminus, the 553-residue chain is CTP synthase (553 aa).

Residues 1-270 are amidoligase domain; it reads MTKYVFVTGG…DRLICEELRL (270 aa). Ser-13 is a binding site for CTP. Ser-13 serves as a coordination point for UTP. Residues 14–19 and Asp-71 each bind ATP; that span reads SLGKGI. The Mg(2+) site is built by Asp-71 and Glu-144. CTP contacts are provided by residues 151 to 153, 191 to 196, and Lys-227; these read DIE and KTKPTQ. UTP-binding positions include 191–196 and Lys-227; that span reads KTKPTQ. Residues 295–547 enclose the Glutamine amidotransferase type-1 domain; that stretch reads TIGMVGKYVD…VQAALACQQT (253 aa). An L-glutamine-binding site is contributed by Gly-356. Residue Cys-383 is the Nucleophile; for glutamine hydrolysis of the active site. Residues 384–387, Glu-407, and Arg-473 contribute to the L-glutamine site; that span reads LGMQ. Residues His-520 and Glu-522 contribute to the active site.

The protein belongs to the CTP synthase family. In terms of assembly, homotetramer.

The enzyme catalyses UTP + L-glutamine + ATP + H2O = CTP + L-glutamate + ADP + phosphate + 2 H(+). The catalysed reaction is L-glutamine + H2O = L-glutamate + NH4(+). It carries out the reaction UTP + NH4(+) + ATP = CTP + ADP + phosphate + 2 H(+). It functions in the pathway pyrimidine metabolism; CTP biosynthesis via de novo pathway; CTP from UDP: step 2/2. With respect to regulation, allosterically activated by GTP, when glutamine is the substrate; GTP has no effect on the reaction when ammonia is the substrate. The allosteric effector GTP functions by stabilizing the protein conformation that binds the tetrahedral intermediate(s) formed during glutamine hydrolysis. Inhibited by the product CTP, via allosteric rather than competitive inhibition. In terms of biological role, catalyzes the ATP-dependent amination of UTP to CTP with either L-glutamine or ammonia as the source of nitrogen. Regulates intracellular CTP levels through interactions with the four ribonucleotide triphosphates. The sequence is that of CTP synthase from Burkholderia mallei (strain NCTC 10229).